The following is a 94-amino-acid chain: MASETVTNHQEKALALLQADAEKILRLIKVQMDHLTMPQCPLYEEVLDTQMFGLSREVDFAVRLDLISEEQGKEMLGELERELSALHEAFTNKK.

This sequence belongs to the UPF0358 family.

The sequence is that of UPF0358 protein Bcer98_2651 from Bacillus cytotoxicus (strain DSM 22905 / CIP 110041 / 391-98 / NVH 391-98).